A 240-amino-acid chain; its full sequence is 5-oxoprolinase subunit B (240 aa).

194–201 (GWQLIGKT) contacts ATP.

Belongs to the PxpB family. Forms a complex composed of PxpA, PxpB and PxpC. Interacts with PxpC (KipA). Interaction with PxpC prevents the inhibitory action of PxpB (KipI). Interacts with KinA. Two PxpB monomers bind via their C-domains at a conserved proline in the KinA dimerization and histidine-phosphotransfer (DHp) domain.

It catalyses the reaction 5-oxo-L-proline + ATP + 2 H2O = L-glutamate + ADP + phosphate + H(+). Its function is as follows. Catalyzes the cleavage of 5-oxoproline to form L-glutamate coupled to the hydrolysis of ATP to ADP and inorganic phosphate. In addition, is a potent inhibitor of the autophosphorylation reaction of kinase A (kinA) and its reverse reaction, but does not inhibit phosphate transfer to the Spo0F response regulator once kinase A is phosphorylated. Is an inhibitor of the catalytic domain of kinase A affecting the ATP/ADP reactions and not the phosphotransferase functions of this domain. The inhibition is non-competitive with respect to ATP. This Bacillus subtilis (strain 168) protein is 5-oxoprolinase subunit B.